A 114-amino-acid chain; its full sequence is Superoxide dismutase [Cu-Zn] (114 aa).

Cu cation is bound by residues His-37, His-39, and His-54. Residues 48–76 form a disordered region; sequence CMSSGPHFNPRSKEHGAPTDENRHLGDLG. His-54, His-62, His-71, and Asp-74 together coordinate Zn(2+). Positions 58-73 are enriched in basic and acidic residues; that stretch reads RSKEHGAPTDENRHLG. His-111 contributes to the Cu cation binding site.

Belongs to the Cu-Zn superoxide dismutase family. As to quaternary structure, homodimer. Cu cation is required as a cofactor. Requires Zn(2+) as cofactor.

Its subcellular location is the cytoplasm. It carries out the reaction 2 superoxide + 2 H(+) = H2O2 + O2. Functionally, destroys radicals which are normally produced within the cells and which are toxic to biological systems. In Drosophila obscura (Fruit fly), this protein is Superoxide dismutase [Cu-Zn].